We begin with the raw amino-acid sequence, 154 residues long: Small ribosomal subunit protein bS18 (154 aa).

The disordered stretch occupies residues 1-82 (MEKKTTKKAT…PFAKYNRGYP (82 aa)). The span at 8-19 (KATASKTTTTKK) shows a compositional bias: low complexity. Residues 20–32 (AAAEKTEIKETKK) are compositionally biased toward basic and acidic residues. Over residues 33 to 49 (TTTTKTSTAKKATTASV) the composition is skewed to low complexity. The span at 50–69 (EKTEVKETKKSSDNKKEFNP) shows a compositional bias: basic and acidic residues.

This sequence belongs to the bacterial ribosomal protein bS18 family. As to quaternary structure, part of the 30S ribosomal subunit. Forms a tight heterodimer with protein bS6.

Functionally, binds as a heterodimer with protein bS6 to the central domain of the 16S rRNA, where it helps stabilize the platform of the 30S subunit. In Malacoplasma penetrans (strain HF-2) (Mycoplasma penetrans), this protein is Small ribosomal subunit protein bS18.